Here is a 453-residue protein sequence, read N- to C-terminus: Phenolic glucoside malonyltransferase 1 (453 aa).

Catalysis depends on His165, which acts as the Proton acceptor. The HXXXD motif motif lies at 165-169 (HVAGD). Malonyl-CoA contacts are provided by residues Lys254, His266, and 268 to 269 (TS). The Proton acceptor role is filled by Asp394. The DFGWG motif motif lies at 394–398 (DFGWG).

It belongs to the plant acyltransferase family. Phenolic glucoside malonyltransferase subfamily. In terms of assembly, monomer. In terms of tissue distribution, highly expressed in flower. Also expressed in flower bud, stem, root and leaf.

The catalysed reaction is a flavonol 3-O-beta-D-glucoside + malonyl-CoA = a flavonol 3-O-(6-O-malonyl-beta-D-glucoside) + CoA. It catalyses the reaction a flavonol 7-O-beta-D-glucoside + malonyl-CoA = a flavonol 7-O-(6-O-malonyl-beta-D-glucoside) + CoA. Its function is as follows. Malonyltransferase with broad substrate specificity acting on phenolic glucosides including xenobiotic naphthols. Has activity against flavonoid 7-O-glucosides, flavonoid 3-O-glucosides and naphthol glucosides, and to a lesser extent against coumarin glucosides in vitro. Prefers malonyl-CoA as an acyl donor, but also active with succinyl-CoA and methylmalonyl-CoA, but not with acetyl-CoA. The chain is Phenolic glucoside malonyltransferase 1 from Nicotiana tabacum (Common tobacco).